The primary structure comprises 257 residues: Ribosomal RNA small subunit methyltransferase J (257 aa).

Residues 109–110 (RD), 125–126 (ER), and Asp179 contribute to the S-adenosyl-L-methionine site.

The protein belongs to the methyltransferase superfamily. RsmJ family.

The protein resides in the cytoplasm. The enzyme catalyses guanosine(1516) in 16S rRNA + S-adenosyl-L-methionine = N(2)-methylguanosine(1516) in 16S rRNA + S-adenosyl-L-homocysteine + H(+). Functionally, specifically methylates the guanosine in position 1516 of 16S rRNA. This is Ribosomal RNA small subunit methyltransferase J from Actinobacillus succinogenes (strain ATCC 55618 / DSM 22257 / CCUG 43843 / 130Z).